We begin with the raw amino-acid sequence, 151 residues long: SsrA-binding protein (151 aa).

Belongs to the SmpB family.

It is found in the cytoplasm. Required for rescue of stalled ribosomes mediated by trans-translation. Binds to transfer-messenger RNA (tmRNA), required for stable association of tmRNA with ribosomes. tmRNA and SmpB together mimic tRNA shape, replacing the anticodon stem-loop with SmpB. tmRNA is encoded by the ssrA gene; the 2 termini fold to resemble tRNA(Ala) and it encodes a 'tag peptide', a short internal open reading frame. During trans-translation Ala-aminoacylated tmRNA acts like a tRNA, entering the A-site of stalled ribosomes, displacing the stalled mRNA. The ribosome then switches to translate the ORF on the tmRNA; the nascent peptide is terminated with the 'tag peptide' encoded by the tmRNA and targeted for degradation. The ribosome is freed to recommence translation, which seems to be the essential function of trans-translation. This Nitrosomonas europaea (strain ATCC 19718 / CIP 103999 / KCTC 2705 / NBRC 14298) protein is SsrA-binding protein.